Reading from the N-terminus, the 381-residue chain is MDLSGSRDVISSLPDDISSHILSFLPTKEAASTSVLSKKWRYLFAFVPNLDLDDSVYLNPENETEISTSFMDFVDRVLALQGNSPLHKFSLKIGDGIDPVRIIPWINNVLERGVSDLDLHLNLESEFLLPSQVYLCKTLVWLKLRFGLYPTIDVEDVHLPKLKTLYIEATHFEEHGVGLTKLLSGCPMLEDLVLDDISWFIWDFASVSVPTLKRLRFSWQERDEFPKSVLLDTPNLVYLKFTDTVAGKYPKVNLDSLVEAHIDLRLLKPLLINYHQGYGENDMVGNATDFIMRICNVKTLYLSANTLQVLTYSCDAIPIFNNLTHLTIESNPRVGWQSVPGLLKNSPNLETLIFQGLIHKATYRCGDVCLCKKPRKEILSC.

The F-box domain occupies 7–60 (RDVISSLPDDISSHILSFLPTKEAASTSVLSKKWRYLFAFVPNLDLDDSVYLNP). 6 LRR repeats span residues 118 to 146 (DLHL…KLRF), 171 to 196 (HFEE…VLDD), 218 to 243 (SWQE…KFTD), 249 to 274 (YPKV…LINY), 299 to 330 (TLYL…TIES), and 331 to 356 (NPRV…IFQG).

This is F-box/LRR-repeat protein At4g14103 from Arabidopsis thaliana (Mouse-ear cress).